Here is a 245-residue protein sequence, read N- to C-terminus: NAD(P)H-quinone oxidoreductase subunit K (245 aa).

Residues Cys-58, Cys-59, Cys-123, and Cys-154 each contribute to the [4Fe-4S] cluster site.

It belongs to the complex I 20 kDa subunit family. In terms of assembly, NDH-1 can be composed of about 15 different subunits; different subcomplexes with different compositions have been identified which probably have different functions. It depends on [4Fe-4S] cluster as a cofactor.

Its subcellular location is the cellular thylakoid membrane. The enzyme catalyses a plastoquinone + NADH + (n+1) H(+)(in) = a plastoquinol + NAD(+) + n H(+)(out). The catalysed reaction is a plastoquinone + NADPH + (n+1) H(+)(in) = a plastoquinol + NADP(+) + n H(+)(out). NDH-1 shuttles electrons from an unknown electron donor, via FMN and iron-sulfur (Fe-S) centers, to quinones in the respiratory and/or the photosynthetic chain. The immediate electron acceptor for the enzyme in this species is believed to be plastoquinone. Couples the redox reaction to proton translocation, and thus conserves the redox energy in a proton gradient. Cyanobacterial NDH-1 also plays a role in inorganic carbon-concentration. The sequence is that of NAD(P)H-quinone oxidoreductase subunit K from Nostoc sp. (strain PCC 7120 / SAG 25.82 / UTEX 2576).